A 569-amino-acid chain; its full sequence is Cationic amino acid transporter 5 (569 aa).

Residues 1 to 67 (MEGEERGYWR…KQSEHEMKRC (67 aa)) are Cytoplasmic-facing. Residues 68-88 (LTWWDLVWFGFGSVIGAGIFV) form a helical membrane-spanning segment. Residues 89–97 (LTGQEAHEQ) lie on the Extracellular side of the membrane. A helical transmembrane segment spans residues 98-118 (AGPAIVLSYVVSGLSAMLSVF). At 119–143 (CYTEFAVEIPVAGGSFAYLRIELGD) the chain is on the cytoplasmic side. Residues 144–164 (FAAFITAGNILLESIVGTAAV) traverse the membrane as a helical segment. Residues 165–192 (ARAWTSYFATLLNRSPNALRIKTDLSSG) are Extracellular-facing. Residues 193 to 213 (FNLLDPIAVVVIAASATIASI) form a helical membrane-spanning segment. Residues 214 to 222 (STRKTSLLN) lie on the Cytoplasmic side of the membrane. Residues 223 to 243 (WIASAINTLVIFFVIIAGFIH) form a helical membrane-spanning segment. Residues 244-251 (ADTSNLTP) lie on the Extracellular side of the membrane. A helical transmembrane segment spans residues 252-272 (FLPFGPEGVFRAAAVVYFAYG). Topologically, residues 273–290 (GFDSIATMAEETKNPSRD) are cytoplasmic. Residues 291-311 (IPIGLLGSMSIITVIYCLMAL) form a helical membrane-spanning segment. The Extracellular portion of the chain corresponds to 312 to 341 (SLSMMQKYTDIDPNAAYSVAFQSVGMKWGK). Residues 342–362 (YLVALGALKGMTTVLLVGALG) form a helical membrane-spanning segment. The Cytoplasmic segment spans residues 363-389 (QARYVTHIARTHMIPPIFALVHPKTGT). Residues 390–410 (PINANLLVAIPSALIAFFSGL) traverse the membrane as a helical segment. A topological domain (extracellular) is located at residue aspartate 411. Residues 412-432 (VLASLLSISTLFIFTMMPIAL) form a helical membrane-spanning segment. Over 433–450 (LVRRYYVRQDTPRVHLIK) the chain is Cytoplasmic. Residues 451-471 (LITCLLFVVVSSMGTSAYWGM) traverse the membrane as a helical segment. At 472–477 (QRKGSW) the chain is on the extracellular side. The helical transmembrane segment at 478-498 (IGYTVTVPFWFLGTLGIVFFV) threads the bilayer. At 499 to 505 (PQQRTPK) the chain is on the cytoplasmic side. Residues 506–526 (VWGVPLVPWLPCLSIATNIFL) form a helical membrane-spanning segment. The Extracellular segment spans residues 527 to 537 (MGSLGAMAFVR). The chain crosses the membrane as a helical span at residues 538 to 558 (FGVCTLAMLLYYFLLGLHATF). Topologically, residues 559–569 (DMAHQQIVPRT) are cytoplasmic.

It belongs to the amino acid-polyamine-organocation (APC) superfamily. Cationic amino acid transporter (CAT) (TC 2.A.3.3) family. Expressed in roots, stems, flowers, seeds, and leaves. Mostly present in leaf rims and cotyledons of developing seedlings.

It is found in the cell membrane. Functionally, high-affinity permease involved in the transport of the cationic amino acids (e.g. arginine, and, to a lower extent, citrulline and glutamate). Transport mostly basic amino acids, and, to a lower extent neutral and acidic amino acids. This chain is Cationic amino acid transporter 5 (CAT5), found in Arabidopsis thaliana (Mouse-ear cress).